The following is a 553-amino-acid chain: Interleukin-20 receptor subunit alpha (553 aa).

Positions 1 to 29 are cleaved as a signal peptide; the sequence is MRAPGRPALRPLPLPPLLLLLLAAPWGRA. The Extracellular portion of the chain corresponds to 30 to 250; it reads VPCVSGGLPK…KDQSSEFKAK (221 aa). 2 consecutive Fibronectin type-III domains span residues 37-135 and 136-242; these read LPKP…FLET and QIGP…TLKD. N-linked (GlcNAc...) asparagine glycosylation is found at Asn-42, Asn-83, Asn-91, Asn-182, Asn-191, and Asn-200. A disulfide bridge connects residues Cys-87 and Cys-95. A disulfide bridge links Cys-215 with Cys-236. The helical transmembrane segment at 251 to 271 threads the bilayer; it reads IIFWYVLPVSITVFLFSVMGY. Over 272 to 553 the chain is Cytoplasmic; the sequence is SIYRYIHVGK…EWGLYVQMEN (282 aa). 2 disordered regions span residues 333–353 and 462–515; these read SSDVSSLNDPQPSGNLRPPQE and QEHT…LGEE. Over residues 334 to 346 the composition is skewed to polar residues; the sequence is SDVSSLNDPQPSG. Acidic residues predominate over residues 499–513; that stretch reads QDSEGCEPSEGDGLG.

It belongs to the type II cytokine receptor family. In terms of assembly, heterodimer with IL20RB and heterodimer with IL10RB. Widely expressed with highest levels in skin and testis and high levels in brain. Highly expressed in psoriatic skin.

It localises to the membrane. The IL20RA/IL20RB dimer is a receptor for IL19, IL20 and IL24. The IL20RA/IL10RB dimer is a receptor for IL26. The chain is Interleukin-20 receptor subunit alpha (IL20RA) from Homo sapiens (Human).